The chain runs to 246 residues: UPF0309 protein ABC0887 (246 aa).

The SIS domain occupies 33 to 212 (MVHAIKEGKS…VLKMIEQLEE (180 aa)).

This sequence belongs to the UPF0309 family.

The sequence is that of UPF0309 protein ABC0887 from Shouchella clausii (strain KSM-K16) (Alkalihalobacillus clausii).